A 200-amino-acid polypeptide reads, in one-letter code: Large ribosomal subunit protein uL4 (200 aa).

The interval 43 to 71 is disordered; the sequence is RAQKTRAEVSGSGKKPWRQKGTGRARSGD.

It belongs to the universal ribosomal protein uL4 family. As to quaternary structure, part of the 50S ribosomal subunit.

Its function is as follows. One of the primary rRNA binding proteins, this protein initially binds near the 5'-end of the 23S rRNA. It is important during the early stages of 50S assembly. It makes multiple contacts with different domains of the 23S rRNA in the assembled 50S subunit and ribosome. In terms of biological role, forms part of the polypeptide exit tunnel. This chain is Large ribosomal subunit protein uL4, found in Histophilus somni (strain 129Pt) (Haemophilus somnus).